Here is a 121-residue protein sequence, read N- to C-terminus: Large ribosomal subunit protein bL12 (121 aa).

Belongs to the bacterial ribosomal protein bL12 family. In terms of assembly, homodimer. Part of the ribosomal stalk of the 50S ribosomal subunit. Forms a multimeric L10(L12)X complex, where L10 forms an elongated spine to which 2 to 4 L12 dimers bind in a sequential fashion. Binds GTP-bound translation factors.

Its function is as follows. Forms part of the ribosomal stalk which helps the ribosome interact with GTP-bound translation factors. Is thus essential for accurate translation. The protein is Large ribosomal subunit protein bL12 of Streptococcus uberis (strain ATCC BAA-854 / 0140J).